A 231-amino-acid chain; its full sequence is Enolase-phosphatase E1 (231 aa).

The segment at 206–231 is disordered; it reads LLERPGNAPQPKHSHPKISSFENFNP.

It belongs to the HAD-like hydrolase superfamily. MasA/MtnC family. As to quaternary structure, monomer. The cofactor is Mg(2+).

It catalyses the reaction 5-methylsulfanyl-2,3-dioxopentyl phosphate + H2O = 1,2-dihydroxy-5-(methylsulfanyl)pent-1-en-3-one + phosphate. It functions in the pathway amino-acid biosynthesis; L-methionine biosynthesis via salvage pathway; L-methionine from S-methyl-5-thio-alpha-D-ribose 1-phosphate: step 3/6. It participates in amino-acid biosynthesis; L-methionine biosynthesis via salvage pathway; L-methionine from S-methyl-5-thio-alpha-D-ribose 1-phosphate: step 4/6. Its function is as follows. Bifunctional enzyme that catalyzes the enolization of 2,3-diketo-5-methylthiopentyl-1-phosphate (DK-MTP-1-P) into the intermediate 2-hydroxy-3-keto-5-methylthiopentenyl-1-phosphate (HK-MTPenyl-1-P), which is then dephosphorylated to form the acireductone 1,2-dihydroxy-3-keto-5-methylthiopentene (DHK-MTPene). The polypeptide is Enolase-phosphatase E1 (Leptospira borgpetersenii serovar Hardjo-bovis (strain JB197)).